Here is a 574-residue protein sequence, read N- to C-terminus: MAALTRALPAPLHTSTTEYEEAPAPLPTTPGPQLPKYGQRKGWKPKTAADFNGGGAYPECHVAQYPLDMGKKNKGQGSTLALQVDQDGLVRYDAIAQHGRAPGSRVQSSFKDLVPLANRTDVTESERQMERPDDLSVAETAERTRLALERITHGKIKAAQPKHVPKTNSDATYIRYTPANQSADEGKQRIIKMTEVQEDPLEPPRFKHKKIPRGPAEPPPPVLQSPPRAATAQDQKDWMIPPCISNWKNNKGYTIPLDKRLAADGRGLQDVHINDNFAKFSESLYIADRHIREEVRARAQLQQLLAQKQKTSKEEELRLLAQRAREDRSGLSSSVSGSVAAASASRLPAETGINLGGYGSESGSEEESDEEEEDEEAIRERNIVREEKRREREKEMRMSNMGSEMRAKMLAKEANRDISEKIALGLAKPSASKETLLDSRLFNREALSTGFASEDSYNLYDKPLFAGSSAAAAIYRPAGSSRNDESFGGGTEEGIKEEMSKDRFQLGNATRGFEGAEGVEAREGPVQFEKDTIVALDGSADPFGVEQFMDAARRGGKRTAEDRDEERRKRARDE.

Disordered stretches follow at residues 1 to 46, 203 to 234, 350 to 406, 478 to 503, and 549 to 574; these read MAAL…WKPK, PPRF…TAQD, ETGI…SEMR, AGSS…SKDR, and MDAA…ARDE. Pro residues-rich tracts occupy residues 24–33 and 215–224; these read APLPTTPGPQ and PAEPPPPVLQ. The span at 363 to 377 shows a compositional bias: acidic residues; that stretch reads GSEEESDEEEEDEEA. Composition is skewed to basic and acidic residues over residues 378 to 397, 493 to 503, and 558 to 574; these read IRER…KEMR, EGIKEEMSKDR, and RTAE…ARDE.

It belongs to the SNW family. Associated with the spliceosome.

The protein localises to the nucleus. Involved in pre-mRNA splicing. The sequence is that of Pre-mRNA-processing protein 45 (PRP45) from Cryptococcus neoformans var. neoformans serotype D (strain JEC21 / ATCC MYA-565) (Filobasidiella neoformans).